Reading from the N-terminus, the 212-residue chain is Ribonuclease P protein component 3 (212 aa).

Belongs to the eukaryotic/archaeal RNase P protein component 3 family. In terms of assembly, consists of a catalytic RNA component and at least 4-5 protein subunits.

Its subcellular location is the cytoplasm. The catalysed reaction is Endonucleolytic cleavage of RNA, removing 5'-extranucleotides from tRNA precursor.. Part of ribonuclease P, a protein complex that generates mature tRNA molecules by cleaving their 5'-ends. The sequence is that of Ribonuclease P protein component 3 from Pyrococcus abyssi (strain GE5 / Orsay).